A 241-amino-acid chain; its full sequence is Small ribosomal subunit protein uS3 (241 aa).

The region spanning 39-107 is the KH type-2 domain; that stretch reads IREVLMKNLK…EVVINIVEVR (69 aa). A disordered region spans residues 219–241; the sequence is MAELDHAGGGGGGERRRRERDAA. The segment covering 231–241 has biased composition (basic and acidic residues); the sequence is GERRRRERDAA.

It belongs to the universal ribosomal protein uS3 family. In terms of assembly, part of the 30S ribosomal subunit. Forms a tight complex with proteins S10 and S14.

Binds the lower part of the 30S subunit head. Binds mRNA in the 70S ribosome, positioning it for translation. This Beijerinckia indica subsp. indica (strain ATCC 9039 / DSM 1715 / NCIMB 8712) protein is Small ribosomal subunit protein uS3.